The primary structure comprises 204 residues: Allatotropin (204 aa).

The N-terminal stretch at 1–20 (MNLTMQLAVIVAVCLCLAEG) is a signal peptide. A propeptide spanning residues 21–35 (APDVRLTRTKQQRPT) is cleaved from the precursor. The tract at residues 47–83 (RGFGKRDRPHPRAERDVDHQAPSARPNRGTPTFKSPT) is disordered. A Phenylalanine amide modification is found at Phe49. The span at 50-65 (GKRDRPHPRAERDVDH) shows a compositional bias: basic and acidic residues. Residues 53-204 (DRPHPRAERD…LSSEELLRNF (152 aa)) constitute a propeptide that is removed on maturation.

Expressed extensively in the brain, frontal ganglion and terminal ganglion of the day 2 fifth instar larva (at protein level). Not expressed in the larval brain after day 4 of the fifth instar, or in the brain of the pupa or adult. Expression in the terminal ganglion is localized to cells in the posterior portion of the seventh neuromere of day 2 fifth instar larvae. In the pupa and adult expression is detected in the medial region of neuromere 6, the dorsal medial region of neuromere 7, and the posterior neuromere of the terminal ganglion (at protein level). In the frontal ganglion expression decreases in the wandering larvae and is present at low levels in during pupal ecdysis, but is not detected in the adult. Expressed in the subesophageal ganglion of day 2 fifth instar larva, but not at any time before or after day 2. Not expressed in the abdominal ganglia 1-6 of the day 2 fifth instar larva (at protein level). Expressed in the anterior neuromeres of the pterothoracic ganglion in pupa but not in adult (at protein level). Expressed in the unfused abdominal ganglia of day 10 pupae, and in pharate adult is expressed in median neurosecretory cells M1, M2 and M5, but not in median neurosecretory cells M3 and M4 (at protein level). Not expressed in the differentiated median neurosecretory cells M5 of the larva (at protein level). In the pharate adult brain isoform 3 is the predominant form, with lower levels of isoform 2 and very low levels of isoform 1 detected. In the pharate adult nerve cord isoform 3 is the predominant form, with lower levels of isoform 2 and no isoform 1 detected. In the pharate adult frontal ganglion isoform 3 is expressed, but not isoform 1 and isoform 2.

The protein resides in the secreted. In terms of biological role, neuropeptide stimulator of juvenile hormone synthesis. Cardioregulatory neurohormone that increases heart beat rate in the adult but not in the larva. Inhibits active ion transport in the midgut of feeding fourth instar and day 2 fifth instar larva, but not in the midgut of pharate or wandering fifth instar larva. The chain is Allatotropin from Manduca sexta (Tobacco hawkmoth).